Here is a 332-residue protein sequence, read N- to C-terminus: DNA-directed RNA polymerase subunit alpha (332 aa).

Positions 2–234 are alpha N-terminal domain (alpha-NTD); the sequence is TVTANQVLRP…DQLSVFGDFT (233 aa). An alpha C-terminal domain (alpha-CTD) region spans residues 248–332; the sequence is VDPVLLRPID…AGVAQHGMLG (85 aa).

The protein belongs to the RNA polymerase alpha chain family. As to quaternary structure, homodimer. The RNAP catalytic core consists of 2 alpha, 1 beta, 1 beta' and 1 omega subunit. When a sigma factor is associated with the core the holoenzyme is formed, which can initiate transcription.

The catalysed reaction is RNA(n) + a ribonucleoside 5'-triphosphate = RNA(n+1) + diphosphate. Functionally, DNA-dependent RNA polymerase catalyzes the transcription of DNA into RNA using the four ribonucleoside triphosphates as substrates. This is DNA-directed RNA polymerase subunit alpha from Xanthomonas axonopodis pv. citri (strain 306).